The primary structure comprises 211 residues: Thymidylate kinase (211 aa).

Position 11–18 (glycine 11–threonine 18) interacts with ATP.

This sequence belongs to the thymidylate kinase family.

The enzyme catalyses dTMP + ATP = dTDP + ADP. Phosphorylation of dTMP to form dTDP in both de novo and salvage pathways of dTTP synthesis. The chain is Thymidylate kinase from Streptococcus equi subsp. zooepidemicus (strain H70).